Here is a 446-residue protein sequence, read N- to C-terminus: Probable glycine dehydrogenase (decarboxylating) subunit 1 (446 aa).

The protein belongs to the GcvP family. N-terminal subunit subfamily. In terms of assembly, the glycine cleavage system is composed of four proteins: P, T, L and H. In this organism, the P 'protein' is a heterodimer of two subunits.

It catalyses the reaction N(6)-[(R)-lipoyl]-L-lysyl-[glycine-cleavage complex H protein] + glycine + H(+) = N(6)-[(R)-S(8)-aminomethyldihydrolipoyl]-L-lysyl-[glycine-cleavage complex H protein] + CO2. The glycine cleavage system catalyzes the degradation of glycine. The P protein binds the alpha-amino group of glycine through its pyridoxal phosphate cofactor; CO(2) is released and the remaining methylamine moiety is then transferred to the lipoamide cofactor of the H protein. The chain is Probable glycine dehydrogenase (decarboxylating) subunit 1 from Desulfitobacterium hafniense (strain DSM 10664 / DCB-2).